The primary structure comprises 63 residues: Large ribosomal subunit protein bL28 (63 aa).

This sequence belongs to the bacterial ribosomal protein bL28 family.

This Clostridium kluyveri (strain NBRC 12016) protein is Large ribosomal subunit protein bL28.